Here is a 232-residue protein sequence, read N- to C-terminus: MTENAVLQLRAERIARATRPFLARGNRVRRCQRCLLPEKLCLCSTITPAQAKSRFCLLMFDTEPMKPSNTGRLIADILPDTVAFQWSRTEPSQDLLELVQNPDYQPMVVFPASYADEQREVIFTPPAGKPPLFIMLDGTWPEARKMFRKSPYLDNLPVISVDLSRLSAYRLREAQAEGQYCTAEVAIALLDMAGDTGAAAGLGEHFTRFKTRYLAGKTQHLGSITAEQLESV.

Zn(2+)-binding residues include cysteine 31, cysteine 34, cysteine 41, and cysteine 43. Residues 137-140 carry the DXTW motif; the sequence is DGTW.

It belongs to the TDD superfamily. DTWD2 family. TapT subfamily. Monomer in solution.

It carries out the reaction a uridine in tRNA + S-adenosyl-L-methionine = a 3-[(3S)-3-amino-3-carboxypropyl]uridine in tRNA + S-methyl-5'-thioadenosine + H(+). The enzyme catalyses uridine(47) in tRNA(Phe) + S-adenosyl-L-methionine = 3-[(3S)-3-amino-3-carboxypropyl]uridine(47) in tRNA(Phe) + S-methyl-5'-thioadenosine + H(+). The degree of the acp3U modification at U47 is dependent on the presence of the m7G modification at the preceding nucleotide G46. It also depends on medium conditions. Functionally, catalyzes the formation of 3-(3-amino-3-carboxypropyl)uridine (acp3U) at position 47 of tRNAs. Acp3U47 confers thermal stability on tRNA. The protein is tRNA-uridine aminocarboxypropyltransferase of Escherichia coli (strain K12).